An 89-amino-acid polypeptide reads, in one-letter code: Aminoacyl carrier protein 2 (89 aa).

The Carrier domain maps to 6-84; that stretch reads INVQNRVLSV…AMERMILNQL (79 aa). Residue serine 42 is modified to O-(pantetheine 4'-phosphoryl)serine.

Post-translationally, 4'-phosphopantetheine is transferred from CoA to a specific serine of the apo-form of this carrier protein.

In terms of biological role, aminoacyl carrier protein. Can be charged with L-glycine via the formation of a thioester bond between the amino acid and the 4'-phosphopantetheinyl prosthetic group, catalyzed by the bll6282 ligase. In Bradyrhizobium diazoefficiens (strain JCM 10833 / BCRC 13528 / IAM 13628 / NBRC 14792 / USDA 110), this protein is Aminoacyl carrier protein 2.